An 87-amino-acid polypeptide reads, in one-letter code: U14-lycotoxin-Ls1b (87 aa).

A signal peptide spans 1–20 (MNSKVFVVLLLLALSTCVLS). Residues 21–66 (EKYCPTPRNTSCKKMNIRNNCCRDSDCTSNAFCCAEPCGNFCHKAS) form the WAP domain. 5 cysteine pairs are disulfide-bonded: C24-C54, C32-C58, C41-C53, C42-C80, and C47-C62.

It belongs to the venom protein 11 family. 01 (wap-1) subfamily. Post-translationally, contains 5 disulfide bonds. In terms of tissue distribution, expressed by the venom gland.

It is found in the secreted. In terms of biological role, has antibacterial activity. In Lycosa singoriensis (Wolf spider), this protein is U14-lycotoxin-Ls1b.